A 424-amino-acid polypeptide reads, in one-letter code: Serine--tRNA ligase (424 aa).

231–233 (TAE) is a binding site for L-serine. 262-264 (RSE) lines the ATP pocket. An L-serine-binding site is contributed by Glu285. Residue 349-352 (EISS) coordinates ATP. Ser385 contacts L-serine.

The protein belongs to the class-II aminoacyl-tRNA synthetase family. Type-1 seryl-tRNA synthetase subfamily. As to quaternary structure, homodimer. The tRNA molecule binds across the dimer.

It is found in the cytoplasm. The catalysed reaction is tRNA(Ser) + L-serine + ATP = L-seryl-tRNA(Ser) + AMP + diphosphate + H(+). The enzyme catalyses tRNA(Sec) + L-serine + ATP = L-seryl-tRNA(Sec) + AMP + diphosphate + H(+). It participates in aminoacyl-tRNA biosynthesis; selenocysteinyl-tRNA(Sec) biosynthesis; L-seryl-tRNA(Sec) from L-serine and tRNA(Sec): step 1/1. In terms of biological role, catalyzes the attachment of serine to tRNA(Ser). Is also able to aminoacylate tRNA(Sec) with serine, to form the misacylated tRNA L-seryl-tRNA(Sec), which will be further converted into selenocysteinyl-tRNA(Sec). The chain is Serine--tRNA ligase from Bacillus anthracis (strain A0248).